A 370-amino-acid polypeptide reads, in one-letter code: Phosphoserine aminotransferase (370 aa).

Position 42 (arginine 42) interacts with L-glutamate. Residues tryptophan 108, threonine 158, aspartate 182, and glutamine 205 each coordinate pyridoxal 5'-phosphate. At lysine 206 the chain carries N6-(pyridoxal phosphate)lysine. 247-248 (NT) is a binding site for pyridoxal 5'-phosphate.

Belongs to the class-V pyridoxal-phosphate-dependent aminotransferase family. SerC subfamily. Homodimer. Requires pyridoxal 5'-phosphate as cofactor.

The protein resides in the cytoplasm. The catalysed reaction is O-phospho-L-serine + 2-oxoglutarate = 3-phosphooxypyruvate + L-glutamate. It carries out the reaction 4-(phosphooxy)-L-threonine + 2-oxoglutarate = (R)-3-hydroxy-2-oxo-4-phosphooxybutanoate + L-glutamate. It participates in amino-acid biosynthesis; L-serine biosynthesis; L-serine from 3-phospho-D-glycerate: step 2/3. It functions in the pathway cofactor biosynthesis; pyridoxine 5'-phosphate biosynthesis; pyridoxine 5'-phosphate from D-erythrose 4-phosphate: step 3/5. Its function is as follows. Catalyzes the reversible conversion of 3-phosphohydroxypyruvate to phosphoserine and of 3-hydroxy-2-oxo-4-phosphonooxybutanoate to phosphohydroxythreonine. The sequence is that of Phosphoserine aminotransferase from Albidiferax ferrireducens (strain ATCC BAA-621 / DSM 15236 / T118) (Rhodoferax ferrireducens).